The chain runs to 87 residues: Small ribosomal subunit protein bS20 (87 aa).

The tract at residues 1-25 (MANTAQARKRARQSVQRNKHNSSLR) is disordered. Residues 7 to 22 (ARKRARQSVQRNKHNS) are compositionally biased toward basic residues.

Belongs to the bacterial ribosomal protein bS20 family.

Its function is as follows. Binds directly to 16S ribosomal RNA. The polypeptide is Small ribosomal subunit protein bS20 (Bordetella bronchiseptica (strain ATCC BAA-588 / NCTC 13252 / RB50) (Alcaligenes bronchisepticus)).